We begin with the raw amino-acid sequence, 513 residues long: Leucine-rich repeat-containing protein 24 (513 aa).

The N-terminal stretch at 1 to 20 is a signal peptide; the sequence is MALRAPALLPLLLLLLPLRA. The LRRNT domain maps to 21–50; that stretch reads AGCPAACRCYSATVECGALRLRVVPLGIPP. 6 LRR repeats span residues 51–72, 75–96, 99–120, 123–144, 147–168, and 171–192; these read GTQT…ALAP, ALRR…AFRA, RLLE…AFVG, QLRV…TFLH, RLQE…ALAG, and SLAL…ALQP. Positions 204–259 constitute an LRRCT domain; it reads NPWRCDCALHWLGAWIKEGGQRLLTSRDRKIMCAEPPRLALQSLLDVSHSSLICIP. Positions 260–361 constitute an Ig-like C2-type domain; that stretch reads PSVHVQPLEL…GAARVPFRLL (102 aa). A disulfide bridge connects residues cysteine 281 and cysteine 345. Asparagine 334 and asparagine 363 each carry an N-linked (GlcNAc...) asparagine glycan. The segment at 365 to 391 is disordered; that stretch reads SRQQPQQPAQPPPPAARPAGSEPRPEA. The helical transmembrane segment at 406 to 426 threads the bilayer; sequence AIAAAIALLALTALLLVAMIC.

Its subcellular location is the membrane. The chain is Leucine-rich repeat-containing protein 24 (LRRC24) from Homo sapiens (Human).